Reading from the N-terminus, the 396-residue chain is Enoyl-[acyl-carrier-protein] reductase [NADH] (396 aa).

Residues 47–52, 73–74, 110–111, and 138–139 each bind NAD(+); these read GASTGF, FE, DA, and LA. Residue Y224 coordinates substrate. Y234 functions as the Proton donor in the catalytic mechanism. NAD(+) is bound by residues K243 and 272 to 274; that span reads LVT.

It belongs to the TER reductase family. Monomer.

It catalyses the reaction a 2,3-saturated acyl-[ACP] + NAD(+) = a (2E)-enoyl-[ACP] + NADH + H(+). It participates in lipid metabolism; fatty acid biosynthesis. In terms of biological role, involved in the final reduction of the elongation cycle of fatty acid synthesis (FAS II). Catalyzes the reduction of a carbon-carbon double bond in an enoyl moiety that is covalently linked to an acyl carrier protein (ACP). In Flavobacterium johnsoniae (strain ATCC 17061 / DSM 2064 / JCM 8514 / BCRC 14874 / CCUG 350202 / NBRC 14942 / NCIMB 11054 / UW101) (Cytophaga johnsonae), this protein is Enoyl-[acyl-carrier-protein] reductase [NADH].